The following is an 89-amino-acid chain: MLQRDTTIINKLGLHARASAKLTQLAGNFVSQVKMSRNGRQVDAKSIMGVMMLAAGIGSTVTLETDGPDEQEAMDALLALIANRFGEGE.

In terms of domain architecture, HPr spans 1–88 (MLQRDTTIIN…ALIANRFGEG (88 aa)). H15 (pros-phosphohistidine intermediate) is an active-site residue.

It belongs to the HPr family.

The protein resides in the cytoplasm. In terms of biological role, general (non sugar-specific) component of the phosphoenolpyruvate-dependent sugar phosphotransferase system (sugar PTS). This major carbohydrate active-transport system catalyzes the phosphorylation of incoming sugar substrates concomitantly with their translocation across the cell membrane. The phosphoryl group from phosphoenolpyruvate (PEP) is transferred to the phosphoryl carrier protein HPr by enzyme I. Phospho-HPr then transfers it to the PTS EIIA domain. The polypeptide is Phosphocarrier protein HPr (phbH) (Cupriavidus necator (strain ATCC 17699 / DSM 428 / KCTC 22496 / NCIMB 10442 / H16 / Stanier 337) (Ralstonia eutropha)).